Reading from the N-terminus, the 598-residue chain is DNA polymerase alpha subunit B (598 aa).

Positions 112 to 140 (SYTTPSKGSQKRAISTPETPLTKRSVSTR) are enriched in polar residues. A disordered region spans residues 112–167 (SYTTPSKGSQKRAISTPETPLTKRSVSTRSPHQLLSPSSFSPSATPSQKYNSRSNR). Ser126 carries the phosphoserine modification. Phosphothreonine occurs at positions 127 and 130. Ser141, Ser147, Ser152, and Ser154 each carry phosphoserine. Positions 141-158 (SPHQLLSPSSFSPSATPS) are enriched in low complexity.

This sequence belongs to the DNA polymerase alpha subunit B family. In terms of assembly, component of the alpha DNA polymerase complex (also known as the alpha DNA polymerase-primase complex) consisting of four subunits: the catalytic subunit POLA1, the regulatory subunit POLA2, and primase complex subunits PRIM1 and PRIM2 respectively. Within the complex, POLA1 directly interacts with PRIM2/p58. In terms of processing, phosphorylated in a cell cycle-dependent manner, in G2/M phase.

The protein localises to the nucleus. Functionally, accessory subunit of the DNA polymerase alpha complex (also known as the alpha DNA polymerase-primase complex) which plays an essential role in the initiation of DNA synthesis. During the S phase of the cell cycle, the DNA polymerase alpha complex (composed of a catalytic subunit POLA1, an accessory subunit POLA2 and two primase subunits, the catalytic subunit PRIM1 and the regulatory subunit PRIM2) is recruited to DNA at the replicative forks via direct interactions with MCM10 and WDHD1. The primase subunit of the polymerase alpha complex initiates DNA synthesis by oligomerising short RNA primers on both leading and lagging strands. These primers are initially extended by the polymerase alpha catalytic subunit and subsequently transferred to polymerase delta and polymerase epsilon for processive synthesis on the lagging and leading strand, respectively. The sequence is that of DNA polymerase alpha subunit B (POLA2) from Homo sapiens (Human).